An 82-amino-acid polypeptide reads, in one-letter code: Small ribosomal subunit protein uS17 (82 aa).

The protein belongs to the universal ribosomal protein uS17 family. Part of the 30S ribosomal subunit.

Its function is as follows. One of the primary rRNA binding proteins, it binds specifically to the 5'-end of 16S ribosomal RNA. This is Small ribosomal subunit protein uS17 from Bradyrhizobium sp. (strain BTAi1 / ATCC BAA-1182).